Here is a 126-residue protein sequence, read N- to C-terminus: MSALDDSIRVEVKTEYIEQQSSPEDQKYLFSYTITIINLGEQAAKLETRHWIITDANGKISEVQGAGVVGETPTIPPNTAYQYTSGTVLDTPLGIMYGTYGMVSESGEHFKATIKPFRLALPGLLH.

An ApaG domain is found at 2 to 126 (SALDDSIRVE…FRLALPGLLH (125 aa)).

The polypeptide is Protein ApaG (Shewanella sp. (strain ANA-3)).